A 215-amino-acid polypeptide reads, in one-letter code: WAT1-related protein At3g28060 (215 aa).

Transmembrane regions (helical) follow at residues 48-68 (IIIG…AVAY), 82-102 (FALA…VSLF), 117-137 (IMLI…VVES), 146-166 (VFLA…GAIF), and 176-196 (VIGG…FHIA). One can recognise an EamA domain in the interval 65–186 (AVAYIVQTHI…IGGTLISIGF (122 aa)).

This sequence belongs to the drug/metabolite transporter (DMT) superfamily. Plant drug/metabolite exporter (P-DME) (TC 2.A.7.4) family.

It is found in the membrane. This chain is WAT1-related protein At3g28060, found in Arabidopsis thaliana (Mouse-ear cress).